A 248-amino-acid polypeptide reads, in one-letter code: tRNA pseudouridine synthase A 2 (248 aa).

Residue Asp55 is the Nucleophile of the active site. Position 113 (Tyr113) interacts with substrate.

This sequence belongs to the tRNA pseudouridine synthase TruA family. As to quaternary structure, homodimer.

It carries out the reaction uridine(38/39/40) in tRNA = pseudouridine(38/39/40) in tRNA. In terms of biological role, formation of pseudouridine at positions 38, 39 and 40 in the anticodon stem and loop of transfer RNAs. The protein is tRNA pseudouridine synthase A 2 of Clostridium tetani (strain Massachusetts / E88).